A 342-amino-acid chain; its full sequence is MKYLVLALCTYLCSQTGADENAAQGIPLEAQRLTGEPLVAYLRRSQNLFEVNSAPTPNFEQKIMDIKYKHQKLNLMVKEDPDPEVDIPPSYDPRDVWKNCTTFYIRDQANCGSCWAVSTAAAISDRICIASKAEKQVNISATDIMTCCRPQCGDGCEGGWPIEAWKYFIYDGVVSGGEYLTKDVCRPYPIHPCGHHGNDTYYGECRGTAPTPPCKRKCRPGVRKMYRIDKRYGKDAYIVKQSVKAIQSEILRNGPVVASFAVYEDFRHYKSGIYKHTAGELRGYHAVKMIGWGNENNTDFWLIANSWHNDWGEKGYFRIIRGTNDCGIEGTIAAGIVDTESL.

The N-terminal stretch at 1–18 (MKYLVLALCTYLCSQTGA) is a signal peptide. Positions 19-86 (DENAAQGIPL…VKEDPDPEVD (68 aa)) are cleaved as a propeptide — activation peptide. The N-linked (GlcNAc...) asparagine glycan is linked to Asn-99. 6 cysteine pairs are disulfide-bonded: Cys-100/Cys-128, Cys-111/Cys-156, Cys-147/Cys-214, Cys-148/Cys-152, Cys-185/Cys-218, and Cys-193/Cys-205. Cys-114 is a catalytic residue. Asn-138 is a glycosylation site (N-linked (GlcNAc...) asparagine). N-linked (GlcNAc...) asparagine glycosylation occurs at Asn-198. Residue His-285 is part of the active site. An N-linked (GlcNAc...) asparagine glycan is attached at Asn-296. Asn-305 is a catalytic residue.

It belongs to the peptidase C1 family.

Functionally, expression of the protease correlates with blood-feeding and suggests a role for the protease in blood digestion. In Haemonchus contortus (Barber pole worm), this protein is Cathepsin B-like cysteine proteinase 1 (AC-1).